The following is a 230-amino-acid chain: Ribonuclease 3 (230 aa).

An RNase III domain is found at 1–134 (MKQLEELLST…FLGALLLDKG (134 aa)). Glu47 provides a ligand contact to Mg(2+). Asp51 is an active-site residue. Positions 120 and 123 each coordinate Mg(2+). The active site involves Glu123. Positions 160-229 (DYKTCLQEFL…AKNALAQLSE (70 aa)) constitute a DRBM domain.

It belongs to the ribonuclease III family. In terms of assembly, homodimer. The cofactor is Mg(2+).

It is found in the cytoplasm. It catalyses the reaction Endonucleolytic cleavage to 5'-phosphomonoester.. In terms of biological role, digests double-stranded RNA. Involved in the processing of primary rRNA transcript to yield the immediate precursors to the large and small rRNAs (23S and 16S). Processes some mRNAs, and tRNAs when they are encoded in the rRNA operon. Processes pre-crRNA and tracrRNA of type II CRISPR loci if present in the organism. The sequence is that of Ribonuclease 3 from Streptococcus pyogenes serotype M3 (strain SSI-1).